Consider the following 942-residue polypeptide: Valine--tRNA ligase (942 aa).

The short motif at 43–53 (PNVTGTLHMGH) is the 'HIGH' region element. Residues 551–555 (KMSKS) carry the 'KMSKS' region motif. Position 554 (Lys-554) interacts with ATP. Positions 876–942 (EGLVDLDAER…AGLREQRAKL (67 aa)) form a coiled coil.

This sequence belongs to the class-I aminoacyl-tRNA synthetase family. ValS type 1 subfamily. As to quaternary structure, monomer.

Its subcellular location is the cytoplasm. It carries out the reaction tRNA(Val) + L-valine + ATP = L-valyl-tRNA(Val) + AMP + diphosphate. Catalyzes the attachment of valine to tRNA(Val). As ValRS can inadvertently accommodate and process structurally similar amino acids such as threonine, to avoid such errors, it has a 'posttransfer' editing activity that hydrolyzes mischarged Thr-tRNA(Val) in a tRNA-dependent manner. The sequence is that of Valine--tRNA ligase from Stenotrophomonas maltophilia (strain R551-3).